Reading from the N-terminus, the 454-residue chain is MFRSQRMKFLELVVLERDVDRVLEYLGKTALVHLRLSAAARGSSSHCAQSKEYVGRLEEACKYLGVSGECAFSPGDSLPTEEDYTLAQQILAEVDALHAREREGDAPSVPRGKSSVAHDSANEEQFQGEKCALGSMRGPALCALLRRFALQERVHRTRDALESTRHTYRIAGWLPAHEAKDLVAGLDNVTTGRMAVRLFEPQELSFIRDGSEHVPVCYQHGRFVRSYERMVSSYGCPPYGLVDPTPFVAFSYALLFGIMFGDLGQGLLFFVLGLLLRTRRVRALNRWAHLDYVFLSVGFSSMVMGFLTGEFFAHGTLLAPLIRSVTALCGGVPRDHILHLMPSHGSLHTLMAFFGFTLFLGFVINSLGLIINIVNQVRLRHALQQCVQKRECADSSFFGTWLPLQCAYHFLEFHSGSLMRLQWACLSWVFFVKSFWSVCASVCVRGFLKVLACI.

The interval 101-121 (EREGDAPSVPRGKSSVAHDSA) is disordered. 4 consecutive transmembrane segments (helical) span residues 254-274 (LLFG…VLGL), 293-313 (VFLS…EFFA), 351-371 (MAFF…GLII), and 424-444 (ACLS…SVCV).

The protein belongs to the V-ATPase 116 kDa subunit family.

It is found in the cell membrane. In terms of biological role, produces ATP from ADP in the presence of a proton gradient across the membrane. The chain is V-type ATP synthase subunit I 2 (atpI2) from Treponema pallidum (strain Nichols).